Reading from the N-terminus, the 805-residue chain is Sucrose synthase (805 aa).

The interval 275 to 752 is GT-B glycosyltransferase; it reads MVFNVVILSP…GLQRIEEKYT (478 aa).

This sequence belongs to the glycosyltransferase 1 family. Plant sucrose synthase subfamily.

It catalyses the reaction an NDP-alpha-D-glucose + D-fructose = a ribonucleoside 5'-diphosphate + sucrose + H(+). Functionally, sucrose-cleaving enzyme that provides UDP-glucose and fructose for various metabolic pathways. The sequence is that of Sucrose synthase (SS1) from Vigna radiata var. radiata (Mung bean).